The primary structure comprises 251 residues: 5'-nucleotidase SurE (251 aa).

The a divalent metal cation site is built by Asp-8, Asp-9, Ser-39, and Asn-95.

The protein belongs to the SurE nucleotidase family. Requires a divalent metal cation as cofactor.

It localises to the cytoplasm. The enzyme catalyses a ribonucleoside 5'-phosphate + H2O = a ribonucleoside + phosphate. Its function is as follows. Nucleotidase that shows phosphatase activity on nucleoside 5'-monophosphates. This is 5'-nucleotidase SurE from Clostridium botulinum (strain Alaska E43 / Type E3).